A 490-amino-acid chain; its full sequence is Glucose-6-phosphate 1-dehydrogenase (490 aa).

NADP(+)-binding positions include Arg49, Asp91 to Val92, and Lys146. Residues His176, Lys180, Glu214, and Asp233 each coordinate substrate. His238 acts as the Proton acceptor in catalysis. Residues Lys338 and Lys343 each coordinate substrate.

It belongs to the glucose-6-phosphate dehydrogenase family.

The enzyme catalyses D-glucose 6-phosphate + NADP(+) = 6-phospho-D-glucono-1,5-lactone + NADPH + H(+). Its pathway is carbohydrate degradation; pentose phosphate pathway; D-ribulose 5-phosphate from D-glucose 6-phosphate (oxidative stage): step 1/3. Catalyzes the oxidation of glucose 6-phosphate to 6-phosphogluconolactone. This is Glucose-6-phosphate 1-dehydrogenase from Buchnera aphidicola subsp. Schizaphis graminum (strain Sg).